A 132-amino-acid chain; its full sequence is Ribonuclease P protein component (132 aa).

This sequence belongs to the RnpA family. As to quaternary structure, consists of a catalytic RNA component (M1 or rnpB) and a protein subunit.

It catalyses the reaction Endonucleolytic cleavage of RNA, removing 5'-extranucleotides from tRNA precursor.. In terms of biological role, RNaseP catalyzes the removal of the 5'-leader sequence from pre-tRNA to produce the mature 5'-terminus. It can also cleave other RNA substrates such as 4.5S RNA. The protein component plays an auxiliary but essential role in vivo by binding to the 5'-leader sequence and broadening the substrate specificity of the ribozyme. This chain is Ribonuclease P protein component, found in Marinomonas sp. (strain MWYL1).